A 468-amino-acid polypeptide reads, in one-letter code: Intramembrane protease 2 (468 aa).

Residues 1–22 (MAEAATEIPPTASNVTVFTFEE) lie on the Lumenal side of the membrane. Asn-14 carries an N-linked (GlcNAc...) asparagine glycan. A helical transmembrane segment spans residues 23 to 43 (QATSSLALYGMSILCIIIGSI). Over 44-70 (RSAQYIRTNIDKKRLIEGSITMREARK) the chain is Cytoplasmic. Residues 71 to 91 (FPISASLVLFGLYLFFKPAAE) traverse the membrane as a helical segment. Residues 92-168 (RFLWVARVFQ…TNLPTIQKAE (77 aa)) lie on the Lumenal side of the membrane. Asn-114 and Asn-123 each carry an N-linked (GlcNAc...) asparagine glycan. Residues 169-189 (CMQLLTFLICFEGVNAFASLL) form a helical membrane-spanning segment. Residues 190–247 (KPFVTAFLKKMPLVPSFLRFNAPYLFSLKKGNKEMEEGDIEDAKKKETEYLFKIDFDR) are Cytoplasmic-facing. A helical transmembrane segment spans residues 248–265 (YDIIALLMCSPILISHLL). Residues 266 to 267 (KR) are Lumenal-facing. Residues 268 to 284 (HWITNNIIGVSFSILGI) traverse the membrane as a helical segment. The Cytoplasmic segment spans residues 285–296 (ERLHLASFKAGS). A helical transmembrane segment spans residues 297–317 (LLLVGLFFYDIFWVFGTDVMT). Residue Asp-306 is part of the active site. The Lumenal segment spans residues 318 to 343 (SVAKGIDAPILLQFPQDIYRNGIMEA). Residues 344–364 (SKHSMLGLGDIVIPGIFIALL) traverse the membrane as a helical segment. The active site involves Asp-353. Over 365 to 388 (RRFDYRVVQTTAESKAPQGSLKGR) the chain is Cytoplasmic. The helical transmembrane segment at 389 to 409 (YYFVVTVVAYMAGLFITMAVM) threads the bilayer. Topologically, residues 410–415 (HHFKAA) are lumenal. The chain crosses the membrane as a helical span at residues 416–436 (QPALLYLVPCCLFVPLLLAVI). Positions 417-419 (PAL) match the PAL motif. Residues 437–468 (RGELSALWNYDESRHVDNEENRKKVDSGKKNN) are Cytoplasmic-facing.

Belongs to the peptidase A22B family.

It is found in the membrane. The protein localises to the endoplasmic reticulum membrane. Its function is as follows. Acts as intramembrane protease. In larvae, required for the complete shedding of the cuticle during molting, possibly by regulating cholesterol uptake via lrp-1. Involved in embryonic and larval development. This Caenorhabditis elegans protein is Intramembrane protease 2.